A 473-amino-acid polypeptide reads, in one-letter code: Photosystem II CP43 reaction center protein (473 aa).

Residues 1 to 14 constitute a propeptide that is removed on maturation; it reads MKTLYSLRRFYPVE. Threonine 15 is modified (N-acetylthreonine). Residue threonine 15 is modified to Phosphothreonine. The next 5 membrane-spanning stretches (helical) occupy residues 69-93, 134-155, 178-200, 255-275, and 291-312; these read LFEV…PHLA, LLGP…KDRN, KALY…RKIT, KPFA…LSYS, and WFNN…ASQA. Residue glutamate 367 participates in [CaMn4O5] cluster binding. A helical membrane pass occupies residues 447–471; sequence RARAAAAGFEKGIDRDFEPVLSMTP.

This sequence belongs to the PsbB/PsbC family. PsbC subfamily. PSII is composed of 1 copy each of membrane proteins PsbA, PsbB, PsbC, PsbD, PsbE, PsbF, PsbH, PsbI, PsbJ, PsbK, PsbL, PsbM, PsbT, PsbX, PsbY, PsbZ, Psb30/Ycf12, at least 3 peripheral proteins of the oxygen-evolving complex and a large number of cofactors. It forms dimeric complexes. Binds multiple chlorophylls and provides some of the ligands for the Ca-4Mn-5O cluster of the oxygen-evolving complex. It may also provide a ligand for a Cl- that is required for oxygen evolution. PSII binds additional chlorophylls, carotenoids and specific lipids. is required as a cofactor.

The protein localises to the plastid. It is found in the chloroplast thylakoid membrane. Its function is as follows. One of the components of the core complex of photosystem II (PSII). It binds chlorophyll and helps catalyze the primary light-induced photochemical processes of PSII. PSII is a light-driven water:plastoquinone oxidoreductase, using light energy to abstract electrons from H(2)O, generating O(2) and a proton gradient subsequently used for ATP formation. This Buxus microphylla (Littleleaf boxwood) protein is Photosystem II CP43 reaction center protein.